A 199-amino-acid chain; its full sequence is Adenylyl-sulfate kinase (199 aa).

ATP is bound at residue 31–38; sequence GLSGSGKS. The active-site Phosphoserine intermediate is the Ser105.

It belongs to the APS kinase family.

It carries out the reaction adenosine 5'-phosphosulfate + ATP = 3'-phosphoadenylyl sulfate + ADP + H(+). The protein operates within sulfur metabolism; hydrogen sulfide biosynthesis; sulfite from sulfate: step 2/3. In terms of biological role, catalyzes the synthesis of activated sulfate. This chain is Adenylyl-sulfate kinase, found in Marinobacter nauticus (strain ATCC 700491 / DSM 11845 / VT8) (Marinobacter aquaeolei).